The primary structure comprises 356 residues: Histidinol-phosphate aminotransferase (356 aa).

Lys-211 bears the N6-(pyridoxal phosphate)lysine mark.

It belongs to the class-II pyridoxal-phosphate-dependent aminotransferase family. Histidinol-phosphate aminotransferase subfamily. Homodimer. Pyridoxal 5'-phosphate is required as a cofactor.

It catalyses the reaction L-histidinol phosphate + 2-oxoglutarate = 3-(imidazol-4-yl)-2-oxopropyl phosphate + L-glutamate. It functions in the pathway amino-acid biosynthesis; L-histidine biosynthesis; L-histidine from 5-phospho-alpha-D-ribose 1-diphosphate: step 7/9. The protein is Histidinol-phosphate aminotransferase of Aeromonas hydrophila subsp. hydrophila (strain ATCC 7966 / DSM 30187 / BCRC 13018 / CCUG 14551 / JCM 1027 / KCTC 2358 / NCIMB 9240 / NCTC 8049).